Reading from the N-terminus, the 396-residue chain is Ribosomal RNA large subunit methyltransferase I (396 aa).

In terms of domain architecture, PUA spans serine 2–arginine 81.

The protein belongs to the methyltransferase superfamily. RlmI family.

It localises to the cytoplasm. The catalysed reaction is cytidine(1962) in 23S rRNA + S-adenosyl-L-methionine = 5-methylcytidine(1962) in 23S rRNA + S-adenosyl-L-homocysteine + H(+). In terms of biological role, specifically methylates the cytosine at position 1962 (m5C1962) of 23S rRNA. The protein is Ribosomal RNA large subunit methyltransferase I of Escherichia coli O1:K1 / APEC.